We begin with the raw amino-acid sequence, 565 residues long: Thiol:disulfide interchange protein DsbD (565 aa).

An N-terminal signal peptide occupies residues 1 to 19; the sequence is MAQRIFTLILLLCSTSVFA. 2 cysteine pairs are disulfide-bonded: C122-C128 and C182-C304. The next 7 helical transmembrane spans lie at 163 to 183, 208 to 228, 243 to 263, 296 to 316, 323 to 343, 357 to 377, and 384 to 404; these read LPFSALWALLIGIGIAFTPCV, LLTFIYVQGMALTYTALGLVV, YVLIGLAIVFTLLAMSMFGLF, IAGLICSPCTTAPLSAILLYI, WLGGGTLYLYALGMGLPLMLI, WMEQVKTAFGFVILALPVFLL, and VWGLRLWSALGVAFFGWAFIT. The region spanning 434-565 is the Thioredoxin domain; that stretch reads WAFGATHTAQ…FSAHLRDRQP (132 aa). C480 and C483 form a disulfide bridge.

The protein belongs to the thioredoxin family. DsbD subfamily.

The protein localises to the cell inner membrane. It carries out the reaction [protein]-dithiol + NAD(+) = [protein]-disulfide + NADH + H(+). The enzyme catalyses [protein]-dithiol + NADP(+) = [protein]-disulfide + NADPH + H(+). In terms of biological role, required to facilitate the formation of correct disulfide bonds in some periplasmic proteins and for the assembly of the periplasmic c-type cytochromes. Acts by transferring electrons from cytoplasmic thioredoxin to the periplasm. This transfer involves a cascade of disulfide bond formation and reduction steps. This Shigella flexneri serotype 5b (strain 8401) protein is Thiol:disulfide interchange protein DsbD.